The following is a 216-amino-acid chain: LexA repressor (216 aa).

Residues 29–49 (RAEIAQALGFRSPNAAEDHLK) constitute a DNA-binding region (H-T-H motif). Residues Ser134 and Lys171 each act as for autocatalytic cleavage activity in the active site.

The protein belongs to the peptidase S24 family. In terms of assembly, homodimer.

It catalyses the reaction Hydrolysis of Ala-|-Gly bond in repressor LexA.. Represses a number of genes involved in the response to DNA damage (SOS response), including recA and lexA. In the presence of single-stranded DNA, RecA interacts with LexA causing an autocatalytic cleavage which disrupts the DNA-binding part of LexA, leading to derepression of the SOS regulon and eventually DNA repair. The sequence is that of LexA repressor from Bordetella bronchiseptica (strain ATCC BAA-588 / NCTC 13252 / RB50) (Alcaligenes bronchisepticus).